The following is a 504-amino-acid chain: Glutamate--tRNA ligase (504 aa).

Positions 12–22 (PSPTGALHIGG) match the 'HIGH' region motif. The 'KMSKS' region signature appears at 260-264 (KLSKR). Lysine 263 is a binding site for ATP.

Belongs to the class-I aminoacyl-tRNA synthetase family. Glutamate--tRNA ligase type 1 subfamily. As to quaternary structure, monomer.

The protein resides in the cytoplasm. It carries out the reaction tRNA(Glu) + L-glutamate + ATP = L-glutamyl-tRNA(Glu) + AMP + diphosphate. In terms of biological role, catalyzes the attachment of glutamate to tRNA(Glu) in a two-step reaction: glutamate is first activated by ATP to form Glu-AMP and then transferred to the acceptor end of tRNA(Glu). This Bacteroides thetaiotaomicron (strain ATCC 29148 / DSM 2079 / JCM 5827 / CCUG 10774 / NCTC 10582 / VPI-5482 / E50) protein is Glutamate--tRNA ligase.